A 388-amino-acid chain; its full sequence is MNRRLVILVADSAGCGALPDAAAYGDAGSDTLGNTSRAVGGLSLPVLGAMGLGHVTAIQGVPPDPAPTAFHGRMAERSEGKDTTTGHWEMMGVVLRQGLRTFPGGFPPEIVEAFVRETGAPGVLGNTVASGTVIIQELGEEHQRTGKPIVYTSADSVFQVAAHTDTVPLETLYAWCRTARRILDPWRVARVIARPFVGTPGKYARTYDRKDFSMPPPATTVLERLVEAGVPVVGVGKIPDIFDRRGITEEIHTAGNADGLARTAALLDRVDRGLVFVNLVDFDMLYGHRNDPAGYARALEELDRALPAILDRLGPGDLLALTADHGCDPTTPSTDHSREHVPLLVHAPGRGGGDLGTRTTFADLGATVAEYFGVRSDVGTSFLAEVTR.

Positions 11, 283, 288, 324, 325, and 336 each coordinate Mn(2+).

Belongs to the phosphopentomutase family. The cofactor is Mn(2+).

It localises to the cytoplasm. The catalysed reaction is 2-deoxy-alpha-D-ribose 1-phosphate = 2-deoxy-D-ribose 5-phosphate. It carries out the reaction alpha-D-ribose 1-phosphate = D-ribose 5-phosphate. Its pathway is carbohydrate degradation; 2-deoxy-D-ribose 1-phosphate degradation; D-glyceraldehyde 3-phosphate and acetaldehyde from 2-deoxy-alpha-D-ribose 1-phosphate: step 1/2. Functionally, isomerase that catalyzes the conversion of deoxy-ribose 1-phosphate (dRib-1-P) and ribose 1-phosphate (Rib-1-P) to deoxy-ribose 5-phosphate (dRib-5-P) and ribose 5-phosphate (Rib-5-P), respectively. The protein is Phosphopentomutase of Anaeromyxobacter dehalogenans (strain 2CP-1 / ATCC BAA-258).